The chain runs to 351 residues: MSSNSSQAPPNGTPGPFDGPQWPYQAPQSTYVGVAVLMGTVVACASVVNGLVIVVSICYKKLRSPLNYILVNLAVADLLVTLCGSSVSLSNNINGFFVFGRRMCELEGFMVSLTGIVGLWSLAILALERYVVVCKPLGDFQFQRRHAVSGCAFTWGWALLWSAPPLLGWSSYVPEGLRTSCGPNWYTGGSNNNSYILSLFVTCFVLPLSLILFSYTNLLLTLRAAAAQQKEADTTQRAEREVTRMVIVMVMAFLLCWLPYSTFALVVATHKGIIIQPVLASLPSYFSKTATVYNPIIYVFMNKQFQSCLLEMLCCGYQPQRTGKASPGTPGPHADVTAAGLRNKVMPAHPV.

Over 1–30 (MSSNSSQAPPNGTPGPFDGPQWPYQAPQST) the chain is Extracellular. Residue asparagine 4 is glycosylated (N-linked (GlcNAc...) asparagine). The helical transmembrane segment at 31 to 55 (YVGVAVLMGTVVACASVVNGLVIVV) threads the bilayer. The Cytoplasmic segment spans residues 56–67 (SICYKKLRSPLN). The helical transmembrane segment at 68–92 (YILVNLAVADLLVTLCGSSVSLSNN) threads the bilayer. At 93 to 107 (INGFFVFGRRMCELE) the chain is on the extracellular side. The cysteines at positions 104 and 181 are disulfide-linked. The chain crosses the membrane as a helical span at residues 108–127 (GFMVSLTGIVGLWSLAILAL). Topologically, residues 128 to 146 (ERYVVVCKPLGDFQFQRRH) are cytoplasmic. The chain crosses the membrane as a helical span at residues 147-170 (AVSGCAFTWGWALLWSAPPLLGWS). Residues 171–194 (SYVPEGLRTSCGPNWYTGGSNNNS) lie on the Extracellular side of the membrane. The N-linked (GlcNAc...) asparagine glycan is linked to asparagine 192. The helical transmembrane segment at 195-222 (YILSLFVTCFVLPLSLILFSYTNLLLTL) threads the bilayer. The Cytoplasmic segment spans residues 223–244 (RAAAAQQKEADTTQRAEREVTR). A helical membrane pass occupies residues 245–268 (MVIVMVMAFLLCWLPYSTFALVVA). The Extracellular segment spans residues 269 to 276 (THKGIIIQ). Residues 277–301 (PVLASLPSYFSKTATVYNPIIYVFM) traverse the membrane as a helical segment. Residue lysine 288 is modified to N6-(retinylidene)lysine. The Cytoplasmic segment spans residues 302–351 (NKQFQSCLLEMLCCGYQPQRTGKASPGTPGPHADVTAAGLRNKVMPAHPV). 2 S-palmitoyl cysteine lipidation sites follow: cysteine 314 and cysteine 315.

Belongs to the G-protein coupled receptor 1 family. Opsin subfamily. Post-translationally, phosphorylated on some or all of the serine and threonine residues present in the C-terminal region. In terms of tissue distribution, pineal gland.

The protein resides in the membrane. Its function is as follows. Produces a slow and prolonged phototransduction response consistent with the non-visual function of pineal photoreception. This Gallus gallus (Chicken) protein is Pinopsin.